The following is a 201-amino-acid chain: Glutathione S-transferase GstA (201 aa).

In terms of domain architecture, GST N-terminal spans 1–81 (MKLFYKPGAC…YLADSVPDRQ (81 aa)). Residues Cys10, Lys35, Val52, 65–66 (EG), Asn99, and 103–106 (TELH) contribute to the glutathione site. In terms of domain architecture, GST C-terminal spans 87–201 (NSISRYKTIE…QDALSAEGLK (115 aa)).

It belongs to the GST superfamily. Beta family. Homodimer.

The protein resides in the cytoplasm. The catalysed reaction is RX + glutathione = an S-substituted glutathione + a halide anion + H(+). Conjugation of reduced glutathione to a wide number of exogenous and endogenous hydrophobic electrophiles. This Escherichia coli O157:H7 protein is Glutathione S-transferase GstA (gstA).